A 370-amino-acid chain; its full sequence is Quinolinate synthase (370 aa).

Residues His62 and Ser83 each contribute to the iminosuccinate site. Residue Cys128 coordinates [4Fe-4S] cluster. Iminosuccinate-binding positions include 154–156 and Ser171; that span reads YAN. Cys215 contacts [4Fe-4S] cluster. Iminosuccinate contacts are provided by residues 241–243 and Thr258; that span reads HPE. Cys312 is a binding site for [4Fe-4S] cluster.

Belongs to the quinolinate synthase family. Type 1 subfamily. [4Fe-4S] cluster serves as cofactor.

It is found in the cytoplasm. The enzyme catalyses iminosuccinate + dihydroxyacetone phosphate = quinolinate + phosphate + 2 H2O + H(+). It participates in cofactor biosynthesis; NAD(+) biosynthesis; quinolinate from iminoaspartate: step 1/1. Functionally, catalyzes the condensation of iminoaspartate with dihydroxyacetone phosphate to form quinolinate. This Neisseria meningitidis serogroup C / serotype 2a (strain ATCC 700532 / DSM 15464 / FAM18) protein is Quinolinate synthase.